The primary structure comprises 355 residues: MRVSDFTFELPDEMIAHYPQPQRSGCRLLSLDGETGALTHGIFTDVLDKLNAGDLLVFNNTRVIPARIFGRKATGGKLEVLVERVLDDKRVLAHVRASKAPKEGTELLLGDNESLKATMLARHDTLFEIRFDDERDVLSILDDIGHMPLPPYINRPDEEADRELYQTVYSERPGAVAAPTAGLHFDEPLLEALRKKGVEMVFVTLHVGAGTFQPVRVETIEDHIMHAEYAEVPQDVVDAVLACKARGNKVVAVGTTSVRSLESAAKACQDELIAPFFNDTQIFIYPGFEYQVVDALITNFHLPESTLIMLVSAFAGYKNTMNAYQEAVAEKYRFFSYGDAMFIRRNPFACKEKIS.

Belongs to the QueA family. Monomer.

It localises to the cytoplasm. The enzyme catalyses 7-aminomethyl-7-carbaguanosine(34) in tRNA + S-adenosyl-L-methionine = epoxyqueuosine(34) in tRNA + adenine + L-methionine + 2 H(+). Its pathway is tRNA modification; tRNA-queuosine biosynthesis. Functionally, transfers and isomerizes the ribose moiety from AdoMet to the 7-aminomethyl group of 7-deazaguanine (preQ1-tRNA) to give epoxyqueuosine (oQ-tRNA). This chain is S-adenosylmethionine:tRNA ribosyltransferase-isomerase, found in Photorhabdus laumondii subsp. laumondii (strain DSM 15139 / CIP 105565 / TT01) (Photorhabdus luminescens subsp. laumondii).